Reading from the N-terminus, the 634-residue chain is tRNA uridine 5-carboxymethylaminomethyl modification enzyme MnmG (634 aa).

14–19 (GGGHAG) serves as a coordination point for FAD. Residue 279–293 (GPRYCPSIEDKVVRF) participates in NAD(+) binding.

The protein belongs to the MnmG family. As to quaternary structure, homodimer. Heterotetramer of two MnmE and two MnmG subunits. FAD serves as cofactor.

Its subcellular location is the cytoplasm. Its function is as follows. NAD-binding protein involved in the addition of a carboxymethylaminomethyl (cmnm) group at the wobble position (U34) of certain tRNAs, forming tRNA-cmnm(5)s(2)U34. This chain is tRNA uridine 5-carboxymethylaminomethyl modification enzyme MnmG, found in Xanthomonas campestris pv. campestris (strain 8004).